The chain runs to 315 residues: Acetyl-coenzyme A carboxylase carboxyl transferase subunit alpha (315 aa).

In terms of domain architecture, CoA carboxyltransferase C-terminal spans 32-289; it reads EIDLLEASLE…KQAFVDQLEQ (258 aa).

It belongs to the AccA family. Acetyl-CoA carboxylase is a heterohexamer composed of biotin carboxyl carrier protein (AccB), biotin carboxylase (AccC) and two subunits each of ACCase subunit alpha (AccA) and ACCase subunit beta (AccD).

The protein localises to the cytoplasm. It catalyses the reaction N(6)-carboxybiotinyl-L-lysyl-[protein] + acetyl-CoA = N(6)-biotinyl-L-lysyl-[protein] + malonyl-CoA. Its pathway is lipid metabolism; malonyl-CoA biosynthesis; malonyl-CoA from acetyl-CoA: step 1/1. Component of the acetyl coenzyme A carboxylase (ACC) complex. First, biotin carboxylase catalyzes the carboxylation of biotin on its carrier protein (BCCP) and then the CO(2) group is transferred by the carboxyltransferase to acetyl-CoA to form malonyl-CoA. The chain is Acetyl-coenzyme A carboxylase carboxyl transferase subunit alpha from Staphylococcus haemolyticus (strain JCSC1435).